The primary structure comprises 175 residues: NADH-ubiquinone oxidoreductase chain 6 (175 aa).

5 helical membrane-spanning segments follow: residues 1–21, 25–45, 47–67, 88–108, and 149–169; these read MMTY…VSFS, SPIY…GIVL, FGGS…MLVV, AVLA…CYIL, and YGTW…LVIM.

It belongs to the complex I subunit 6 family. As to quaternary structure, core subunit of respiratory chain NADH dehydrogenase (Complex I) which is composed of 45 different subunits.

The protein resides in the mitochondrion inner membrane. It carries out the reaction a ubiquinone + NADH + 5 H(+)(in) = a ubiquinol + NAD(+) + 4 H(+)(out). Its function is as follows. Core subunit of the mitochondrial membrane respiratory chain NADH dehydrogenase (Complex I) which catalyzes electron transfer from NADH through the respiratory chain, using ubiquinone as an electron acceptor. Essential for the catalytic activity and assembly of complex I. In Felis catus (Cat), this protein is NADH-ubiquinone oxidoreductase chain 6 (MT-ND6).